A 226-amino-acid chain; its full sequence is Thiamine-phosphate synthase (226 aa).

4-amino-2-methyl-5-(diphosphooxymethyl)pyrimidine contacts are provided by residues 46–50 and asparagine 87; that span reads QLRDK. Aspartate 88 and aspartate 107 together coordinate Mg(2+). Serine 126 serves as a coordination point for 4-amino-2-methyl-5-(diphosphooxymethyl)pyrimidine. 2-[(2R,5Z)-2-carboxy-4-methylthiazol-5(2H)-ylidene]ethyl phosphate is bound at residue 152–154; sequence TPT. Lysine 155 is a binding site for 4-amino-2-methyl-5-(diphosphooxymethyl)pyrimidine. 2-[(2R,5Z)-2-carboxy-4-methylthiazol-5(2H)-ylidene]ethyl phosphate is bound at residue glycine 183.

The protein belongs to the thiamine-phosphate synthase family. Requires Mg(2+) as cofactor.

The enzyme catalyses 2-[(2R,5Z)-2-carboxy-4-methylthiazol-5(2H)-ylidene]ethyl phosphate + 4-amino-2-methyl-5-(diphosphooxymethyl)pyrimidine + 2 H(+) = thiamine phosphate + CO2 + diphosphate. It carries out the reaction 2-(2-carboxy-4-methylthiazol-5-yl)ethyl phosphate + 4-amino-2-methyl-5-(diphosphooxymethyl)pyrimidine + 2 H(+) = thiamine phosphate + CO2 + diphosphate. The catalysed reaction is 4-methyl-5-(2-phosphooxyethyl)-thiazole + 4-amino-2-methyl-5-(diphosphooxymethyl)pyrimidine + H(+) = thiamine phosphate + diphosphate. The protein operates within cofactor biosynthesis; thiamine diphosphate biosynthesis; thiamine phosphate from 4-amino-2-methyl-5-diphosphomethylpyrimidine and 4-methyl-5-(2-phosphoethyl)-thiazole: step 1/1. Its function is as follows. Condenses 4-methyl-5-(beta-hydroxyethyl)thiazole monophosphate (THZ-P) and 2-methyl-4-amino-5-hydroxymethyl pyrimidine pyrophosphate (HMP-PP) to form thiamine monophosphate (TMP). The sequence is that of Thiamine-phosphate synthase from Mycobacterium sp. (strain JLS).